The primary structure comprises 431 residues: Adenylosuccinate synthetase (431 aa).

Residues 12 to 18 and 40 to 42 contribute to the GTP site; these read GDEGKGK and GHT. Catalysis depends on Asp-13, which acts as the Proton acceptor. Mg(2+) is bound by residues Asp-13 and Gly-40. Residues 13 to 16, 38 to 41, Thr-131, Arg-145, Gln-225, Thr-240, and Arg-304 contribute to the IMP site; these read DEGK and NAGH. The active-site Proton donor is the His-41. Residue 300–306 participates in substrate binding; that stretch reads TNTGRRR. GTP-binding positions include Arg-306, 332-334, and 414-416; these read KLD and STS.

Belongs to the adenylosuccinate synthetase family. As to quaternary structure, homodimer. The cofactor is Mg(2+).

It is found in the cytoplasm. It catalyses the reaction IMP + L-aspartate + GTP = N(6)-(1,2-dicarboxyethyl)-AMP + GDP + phosphate + 2 H(+). The protein operates within purine metabolism; AMP biosynthesis via de novo pathway; AMP from IMP: step 1/2. Its function is as follows. Plays an important role in the de novo pathway of purine nucleotide biosynthesis. Catalyzes the first committed step in the biosynthesis of AMP from IMP. The polypeptide is Adenylosuccinate synthetase (Methylocella silvestris (strain DSM 15510 / CIP 108128 / LMG 27833 / NCIMB 13906 / BL2)).